The chain runs to 146 residues: uncharacterized protein (146 aa).

Residues 6 to 26 (IPIFVISLSNISHIILAIFFF) traverse the membrane as a helical segment.

It is found in the membrane. This is an uncharacterized protein from Caenorhabditis elegans.